A 155-amino-acid chain; its full sequence is uncharacterized protein (155 aa).

2 disordered regions span residues 24–63 (RVGY…VVLK) and 80–155 (KAAK…DENE). Residue Ser-50 is modified to Phosphoserine. The residue at position 108 (Lys-108) is an N6-acetyllysine. Positions 128–147 (KQSSVRKNSQKQIKNSSLLS) are enriched in polar residues. 3 positions are modified to phosphoserine: Ser-130, Ser-147, and Ser-150.

This is an uncharacterized protein from Mus musculus (Mouse).